Here is a 520-residue protein sequence, read N- to C-terminus: Putative transporter svop-1 (520 aa).

The Cytoplasmic segment spans residues 1 to 85 (MGDKAILTEV…LGFGRFQLKL (85 aa)). The chain crosses the membrane as a helical span at residues 86-106 (SILTGMAWMADAMEMMLLSLI). The Extracellular portion of the chain corresponds to 107–120 (SPALACEWGISSVQ). The chain crosses the membrane as a helical span at residues 121–141 (QALVTTCVFSGMMLSSTFWGK). Residues 142-157 (ICDRFGRRKGLTFSTL) are Cytoplasmic-facing. Residues 158-178 (VACIMGVISGMSPHFYVLLFF) traverse the membrane as a helical segment. Position 179 (R179) is a topological domain, extracellular. A helical transmembrane segment spans residues 180–200 (GLTGFGIGGVPQSVTLYAEFL). The Cytoplasmic portion of the chain corresponds to 201–208 (PTAQRAKC). The chain crosses the membrane as a helical span at residues 209 to 229 (VVLIESFWAIGAVFEALLAYF). The Extracellular segment spans residues 230-237 (VMESFGWR). A helical membrane pass occupies residues 238–258 (ALMFLSSLPLGIFAVASFWLP). The Cytoplasmic segment spans residues 259 to 319 (ESARFDMASG…LLSPDLRKTT (61 aa)). The chain crosses the membrane as a helical span at residues 320–340 (ILLWCIWAITAFSYYGMVLFT). Over 341–372 (TVLFQSHDECHGGLFSNGTQMEVCQPLTRSDY) the chain is Extracellular. The helical transmembrane segment at 373-393 (FDLLSTTLAEFPGLIITVLII) threads the bilayer. Residues 394–410 (EWFGRKKTMALEYAVFA) lie on the Cytoplasmic side of the membrane. The chain crosses the membrane as a helical span at residues 411–431 (IFTFLLYFCLDRFTVTVLIFV). Over 432–434 (ARA) the chain is Extracellular. A helical membrane pass occupies residues 435–455 (FISGAFQCAYVYTPEVYPTTL). The Cytoplasmic portion of the chain corresponds to 456–461 (RAVGLG). Residues 462–487 (TCSAMARIGAIVTPFIAQVASEKSLS) form a helical membrane-spanning segment. The Extracellular segment spans residues 488-489 (LP). A helical membrane pass occupies residues 490 to 509 (IGIYGTAAILGLIASLSLPI). Over 510 to 520 (ETKGRQMMDSH) the chain is Cytoplasmic.

It belongs to the major facilitator superfamily.

It is found in the membrane. This is Putative transporter svop-1 from Caenorhabditis elegans.